The sequence spans 829 residues: UBA domain-containing protein 8 (829 aa).

An EH 1 domain is found at 10–109; sequence EQQEFDRLLE…KQAKDDHHIK (100 aa). The EF-hand 1 domain occupies 43–78; that stretch reads LPQKILAKIWDYCDQEDKGSLDRNQVYACFRLISQA. A disordered region spans residues 93–121; it reads GDPPILPKQAKDDHHIKRSSSETADFTPF. 2 positions are modified to phosphoserine: Ser112 and Ser113. 2 consecutive EH domains span residues 129 to 225 and 300 to 398; these read ERSE…AKSE and DRSN…SDDT. The EF-hand 2 domain maps to 333 to 368; that stretch reads LDSEELARIWDTVDTQDRGYIDKDEFAVAMEIIKLR. Composition is skewed to polar residues over residues 466–506 and 574–590; these read SFQD…TQSI and TIPG…QTTE. Disordered stretches follow at residues 466-520, 574-614, and 724-785; these read SFQD…VNSS, TIPG…MRKL, and KPQV…QSYE. The stretch at 602–709 forms a coiled coil; sequence EPTEEEQEEM…AKIDSIIADS (108 aa). The segment covering 728–737 has biased composition (pro residues); the sequence is TPAPPTPAPT. Residues 764-774 are compositionally biased toward polar residues; it reads HANSSTPMNYV. Residues 775–785 show a composition bias toward low complexity; sequence SQPESPPQSYE. Residues 788–828 form the UBA domain; that stretch reads QNDNELLQELLSMGFPREKAVIALEATNYDVNEAANILLSS.

This is UBA domain-containing protein 8 (ucp8) from Schizosaccharomyces pombe (strain 972 / ATCC 24843) (Fission yeast).